Reading from the N-terminus, the 404-residue chain is MSKSLIVSSPGKTILFGEHAVVYGATALAAAVSLRSYCKLQTTNNNEIVIVMSDIGTERRWNLQSLPWQHVTVENVQHPASSPNLDLLQGLGELLKNEENGLIHSAMLCTLYLFTSLSSPSQGCTLTISSQVPLGAGLGSSATISVVVATSLLLAFGNIEPPSSNSLQNNKALALIEAWSFLGECCIHGTPSGIDNAVATNGGLIAFRKATAHQSAMKEFLKPKDTLSVMITDTKQPKSTKKLVQGVFELKERLPTVIDSIIDAIDGISKSAVLALTSESDKNSSAKKLGEFIVLNQKLLECLGVSHYSIDRVLQATKSIGWTKLTGAGGGGCTITLLTPECKEEEFKLCKESLLAHKNSIYDVQLGGPGVSVVTDSDSFFPQYESDFDFKKLNLLSKFNKYYI.

ATP is bound by residues lysine 12, serine 130, and 135 to 141 (GAGLGSS). Residues serine 141 and glutamate 184 each contribute to the Mg(2+) site. Aspartate 195 (proton acceptor) is an active-site residue.

It belongs to the GHMP kinase family. Mevalonate kinase subfamily. As to quaternary structure, homodimer. Mg(2+) serves as cofactor.

It localises to the cytoplasm. It is found in the nucleus. The enzyme catalyses (R)-mevalonate + ATP = (R)-5-phosphomevalonate + ADP + H(+). It functions in the pathway isoprenoid biosynthesis; isopentenyl diphosphate biosynthesis via mevalonate pathway; isopentenyl diphosphate from (R)-mevalonate: step 1/3. Its activity is regulated as follows. Farnesyl pyrophosphate and geranyl pyrophosphate inhibit mevalonate kinase by binding competitively at the ATP-binding site. Mevalonate kinase; part of the second module of ergosterol biosynthesis pathway that includes the middle steps of the pathway. Erg12 converts mevalonate into 5-phosphomevalonate. The second module is carried out in the vacuole and involves the formation of farnesyl diphosphate, which is also an important intermediate in the biosynthesis of ubiquinone, dolichol, heme and prenylated proteins. Activity by the mevalonate kinase erg12 first converts mevalonate into 5-phosphomevalonate. 5-phosphomevalonate is then further converted to 5-diphosphomevalonate by the phosphomevalonate kinase erg8. The diphosphomevalonate decarboxylase mvd1 then produces isopentenyl diphosphate. The isopentenyl-diphosphate delta-isomerase idi1 then catalyzes the 1,3-allylic rearrangement of the homoallylic substrate isopentenyl (IPP) to its highly electrophilic allylic isomer, dimethylallyl diphosphate (DMAPP). Finally the farnesyl diphosphate synthase fps1 catalyzes the sequential condensation of isopentenyl pyrophosphate with dimethylallyl pyrophosphate, and then with the resultant geranylpyrophosphate to the ultimate product farnesyl pyrophosphate. This is Mevalonate kinase (erg12) from Schizosaccharomyces pombe (strain 972 / ATCC 24843) (Fission yeast).